The primary structure comprises 190 residues: Imidazoleglycerol-phosphate dehydratase (190 aa).

This sequence belongs to the imidazoleglycerol-phosphate dehydratase family.

It localises to the cytoplasm. It carries out the reaction D-erythro-1-(imidazol-4-yl)glycerol 3-phosphate = 3-(imidazol-4-yl)-2-oxopropyl phosphate + H2O. It functions in the pathway amino-acid biosynthesis; L-histidine biosynthesis; L-histidine from 5-phospho-alpha-D-ribose 1-diphosphate: step 6/9. The protein is Imidazoleglycerol-phosphate dehydratase of Campylobacter hominis (strain ATCC BAA-381 / DSM 21671 / CCUG 45161 / LMG 19568 / NCTC 13146 / CH001A).